We begin with the raw amino-acid sequence, 776 residues long: Protein translocase subunit SecA 2 (776 aa).

ATP-binding positions include Q80, 98–102 (GEGKT), and D486.

It belongs to the SecA family. In terms of assembly, monomer and homodimer. Part of the essential Sec protein translocation apparatus which comprises SecA, SecYEG and auxiliary proteins SecDF. Other proteins may also be involved.

The protein localises to the cell membrane. It is found in the cytoplasm. It catalyses the reaction ATP + H2O + cellular proteinSide 1 = ADP + phosphate + cellular proteinSide 2.. In terms of biological role, part of the Sec protein translocase complex. Interacts with the SecYEG preprotein conducting channel. Has a central role in coupling the hydrolysis of ATP to the transfer of proteins into and across the cell membrane, serving as an ATP-driven molecular motor driving the stepwise translocation of polypeptide chains across the membrane. The polypeptide is Protein translocase subunit SecA 2 (Listeria welshimeri serovar 6b (strain ATCC 35897 / DSM 20650 / CCUG 15529 / CIP 8149 / NCTC 11857 / SLCC 5334 / V8)).